Reading from the N-terminus, the 153-residue chain is Endoribonuclease YbeY (153 aa).

His114, His118, and His124 together coordinate Zn(2+).

It belongs to the endoribonuclease YbeY family. Requires Zn(2+) as cofactor.

It localises to the cytoplasm. Single strand-specific metallo-endoribonuclease involved in late-stage 70S ribosome quality control and in maturation of the 3' terminus of the 16S rRNA. This Finegoldia magna (strain ATCC 29328 / DSM 20472 / WAL 2508) (Peptostreptococcus magnus) protein is Endoribonuclease YbeY.